We begin with the raw amino-acid sequence, 513 residues long: Histidine ammonia-lyase (513 aa).

Positions 146–148 (ASG) form a cross-link, 5-imidazolinone (Ala-Gly). Position 147 is a 2,3-didehydroalanine (Ser) (serine 147).

It belongs to the PAL/histidase family. Contains an active site 4-methylidene-imidazol-5-one (MIO), which is formed autocatalytically by cyclization and dehydration of residues Ala-Ser-Gly.

It is found in the cytoplasm. It carries out the reaction L-histidine = trans-urocanate + NH4(+). It functions in the pathway amino-acid degradation; L-histidine degradation into L-glutamate; N-formimidoyl-L-glutamate from L-histidine: step 1/3. The sequence is that of Histidine ammonia-lyase from Shewanella oneidensis (strain ATCC 700550 / JCM 31522 / CIP 106686 / LMG 19005 / NCIMB 14063 / MR-1).